Reading from the N-terminus, the 294-residue chain is Cytidine deaminase (294 aa).

2 consecutive CMP/dCMP-type deaminase domains span residues 48–168 and 186–294; these read DEDA…FGPK and LTGD…VLLA. 89–91 provides a ligand contact to substrate; it reads NME. Residue His102 coordinates Zn(2+). The Proton donor role is filled by Glu104. Cys129 and Cys132 together coordinate Zn(2+).

The protein belongs to the cytidine and deoxycytidylate deaminase family. As to quaternary structure, homodimer. Requires Zn(2+) as cofactor.

The catalysed reaction is cytidine + H2O + H(+) = uridine + NH4(+). It carries out the reaction 2'-deoxycytidine + H2O + H(+) = 2'-deoxyuridine + NH4(+). This enzyme scavenges exogenous and endogenous cytidine and 2'-deoxycytidine for UMP synthesis. This is Cytidine deaminase from Escherichia coli (strain ATCC 8739 / DSM 1576 / NBRC 3972 / NCIMB 8545 / WDCM 00012 / Crooks).